The chain runs to 142 residues: AP-2 complex subunit sigma (142 aa).

Belongs to the adaptor complexes small subunit family. In terms of assembly, adaptor protein complex 2 (AP-2) is a heterotetramer composed of two large adaptins (alpha-type and beta-type subunits), a medium adaptin (mu-type subunit) and a small adaptin (sigma-type subunit).

Its subcellular location is the cell membrane. It is found in the membrane. The protein resides in the coated pit. Functionally, subunit of the adaptor protein complex 2 (AP-2). Adaptor protein complexes function in protein transport via transport vesicles in different membrane traffic pathways. Adaptor protein complexes are vesicle coat components and appear to be involved in cargo selection and vesicle formation. AP-2 is involved in clathrin-dependent endocytosis in which cargo proteins are incorporated into vesicles surrounded by clathrin (clathrin-coated vesicles, CCVs) which are destined for fusion with the early endosome. The complex binds polyphosphoinositides. The chain is AP-2 complex subunit sigma (AP17) from Arabidopsis thaliana (Mouse-ear cress).